Consider the following 310-residue polypeptide: Oxygen-dependent coproporphyrinogen-III oxidase (310 aa).

Residue S93 participates in substrate binding. A divalent metal cation is bound by residues H97 and H107. The Proton donor role is filled by H107. 109 to 111 lines the substrate pocket; that stretch reads NVR. H146 and H176 together coordinate a divalent metal cation. The important for dimerization stretch occupies residues 241-276; it reads YVEFNLVYDRGTLFGLQSGGRTESILMSLPPQVRWS. 259 to 261 is a binding site for substrate; that stretch reads GGR.

The protein belongs to the aerobic coproporphyrinogen-III oxidase family. In terms of assembly, homodimer. It depends on a divalent metal cation as a cofactor.

It localises to the cytoplasm. It catalyses the reaction coproporphyrinogen III + O2 + 2 H(+) = protoporphyrinogen IX + 2 CO2 + 2 H2O. It participates in porphyrin-containing compound metabolism; protoporphyrin-IX biosynthesis; protoporphyrinogen-IX from coproporphyrinogen-III (O2 route): step 1/1. Involved in the heme biosynthesis. Catalyzes the aerobic oxidative decarboxylation of propionate groups of rings A and B of coproporphyrinogen-III to yield the vinyl groups in protoporphyrinogen-IX. The sequence is that of Oxygen-dependent coproporphyrinogen-III oxidase from Pseudomonas fluorescens (strain SBW25).